Consider the following 364-residue polypeptide: Aminomethyltransferase (364 aa).

It belongs to the GcvT family. In terms of assembly, the glycine cleavage system is composed of four proteins: P, T, L and H.

The enzyme catalyses N(6)-[(R)-S(8)-aminomethyldihydrolipoyl]-L-lysyl-[protein] + (6S)-5,6,7,8-tetrahydrofolate = N(6)-[(R)-dihydrolipoyl]-L-lysyl-[protein] + (6R)-5,10-methylene-5,6,7,8-tetrahydrofolate + NH4(+). Functionally, the glycine cleavage system catalyzes the degradation of glycine. The sequence is that of Aminomethyltransferase from Salmonella paratyphi A (strain AKU_12601).